A 546-amino-acid polypeptide reads, in one-letter code: Undecaprenyl phosphate-alpha-4-amino-4-deoxy-L-arabinose arabinosyl transferase (546 aa).

12 consecutive transmembrane segments (helical) span residues 6–26, 87–107, 113–133, 177–197, 208–228, 260–280, 289–309, 313–333, 345–365, 380–400, 410–430, and 450–467; these read INLAVIVPLFFIMLYLLPLGL, AASAFSTLGAAFCLFLLVGRF, AWVTVSVFLSLFLVSNLGTYS, LLTKGFLALALPVIVVVPFMI, WGWWVMLVALIVTLPWALAIH, YYLPYLLLGTLPWLFLAPSAI, SPLLRYALLWALIPFIFFSAA, LVTYILPCMAPLAIILAQGII, IGSVINCAFFSLISVAVIVLF, PWLLVVVCGSWAVLAYISIKA, YMLMPLSLFLLAWAIIPNISI, and AILIADYPSTMSAFNWYF.

It belongs to the glycosyltransferase 83 family.

The protein resides in the cell inner membrane. The catalysed reaction is 4-amino-4-deoxy-alpha-L-arabinopyranosyl di-trans,octa-cis-undecaprenyl phosphate + lipid IVA = lipid IIA + di-trans,octa-cis-undecaprenyl phosphate.. It functions in the pathway lipopolysaccharide metabolism; 4-amino-4-deoxy-beta-L-arabinose-lipid A biosynthesis. Functionally, catalyzes the transfer of the L-Ara4N moiety of the glycolipid undecaprenyl phosphate-alpha-L-Ara4N to lipid A. The modified arabinose is attached to lipid A and is required for resistance to polymyxin and cationic antimicrobial peptides. The protein is Undecaprenyl phosphate-alpha-4-amino-4-deoxy-L-arabinose arabinosyl transferase of Shewanella sediminis (strain HAW-EB3).